A 267-amino-acid chain; its full sequence is Interleukin-1 alpha (267 aa).

Positions 1–112 (MAKVPDLFED…DPEEGIIKPR (112 aa)) are excised as a propeptide. Asparagine 64 carries an N-linked (GlcNAc...) asparagine glycan. Lysine 82 carries the N6-acetyllysine modification. A nuclear localization signal (NLS) region spans residues 82–86 (KKRRL). Serine 87 bears the Phosphoserine mark. 2 N-linked (GlcNAc...) asparagine glycosylation sites follow: asparagine 100 and asparagine 141.

Belongs to the IL-1 family. In terms of assembly, monomer. Interacts with TMED10; the interaction mediates the translocation from the cytoplasm into the ERGIC (endoplasmic reticulum-Golgi intermediate compartment) and thereby secretion. Interacts with IL1R1. Interacts with S100A13; this interaction is the first step in the export of IL1A, followed by direct translocation of this complex across the plasma membrane. In terms of processing, acetylated within its nuclear localization sequence, which impacts subcellular localization. Proteolytic processed by CAPN1 in a calcium-dependent manner. Cleavage from 31 kDa precursor to 18 kDa biologically active molecules. Post-translationally, phosphorylated. Phosphorylation greatly enhances susceptibility to digestion and promotes the conversion of pre-IL1A alpha to the biologically active IL1A.

Its subcellular location is the nucleus. The protein resides in the cytoplasm. It localises to the secreted. Functionally, cytokine constitutively present intracellularly in nearly all resting non-hematopoietic cells that plays an important role in inflammation and bridges the innate and adaptive immune systems. After binding to its receptor IL1R1 together with its accessory protein IL1RAP, forms the high affinity interleukin-1 receptor complex. Signaling involves the recruitment of adapter molecules such as MYD88, IRAK1 or IRAK4. In turn, mediates the activation of NF-kappa-B and the three MAPK pathways p38, p42/p44 and JNK pathways. Within the cell, acts as an alarmin and cell death results in its liberation in the extracellular space after disruption of the cell membrane to induce inflammation and alert the host to injury or damage. In addition to its role as a danger signal, which occurs when the cytokine is passively released by cell necrosis, directly senses DNA damage and acts as signal for genotoxic stress without loss of cell integrity. This chain is Interleukin-1 alpha (IL1A), found in Oryctolagus cuniculus (Rabbit).